The primary structure comprises 340 residues: uncharacterized protein (340 aa).

It is found in the virion. This is an uncharacterized protein from Acanthamoeba polyphaga (Amoeba).